The chain runs to 925 residues: Protein translocase subunit SecA (925 aa).

Residues Gln-87, 105 to 109 (GEGKT), and Asp-515 each bind ATP. Zn(2+) is bound by residues Cys-909, Cys-911, Cys-920, and His-921.

The protein belongs to the SecA family. Monomer and homodimer. Part of the essential Sec protein translocation apparatus which comprises SecA, SecYEG and auxiliary proteins SecDF-YajC and YidC. Requires Zn(2+) as cofactor.

It is found in the cell inner membrane. Its subcellular location is the cytoplasm. The enzyme catalyses ATP + H2O + cellular proteinSide 1 = ADP + phosphate + cellular proteinSide 2.. Its function is as follows. Part of the Sec protein translocase complex. Interacts with the SecYEG preprotein conducting channel. Has a central role in coupling the hydrolysis of ATP to the transfer of proteins into and across the cell membrane, serving both as a receptor for the preprotein-SecB complex and as an ATP-driven molecular motor driving the stepwise translocation of polypeptide chains across the membrane. This is Protein translocase subunit SecA from Cupriavidus necator (strain ATCC 17699 / DSM 428 / KCTC 22496 / NCIMB 10442 / H16 / Stanier 337) (Ralstonia eutropha).